Reading from the N-terminus, the 540-residue chain is Flavin-dependent halogenase ptaM (540 aa).

Residues M1–A21 form the signal peptide. Residues G14, A17, and E47 each coordinate FAD. Residues N159, N192, N204, and N243 are each glycosylated (N-linked (GlcNAc...) asparagine). The chloride site is built by S330 and G331. N-linked (GlcNAc...) asparagine glycans are attached at residues N480, N491, and N523.

Belongs to the flavin-dependent halogenase family.

Its pathway is secondary metabolite biosynthesis. Its function is as follows. Flavin-dependent halogenase; part of the gene cluster that mediates the biosynthesis of pestheic acid, a diphenyl ether which is a biosynthetic precursor of the unique chloropupukeananes. The biosynthesis initiates from condensation of acetate and malonate units catalyzed by the non-reducing PKS ptaA. As the ptaA protein is TE/CLC domain-deficient, hydrolysis and Claisen cyclization of the polyketide could be catalyzed by ptaB containing a beta-lactamase domain. The ptaB protein might hydrolyze the thioester bond between the ACP of ptaA and the intermediate to release atrochrysone carboxylic acid, which is spontaneously dehydrated to form endocrocin anthrone. Endocrocin anthrone is then converted to endocrocin, catalyzed by the anthrone oxygenase ptaC. Spontaneous decarboxylation of endocrocin occurs to generate emodin. An O-methyltransferase (ptaH or ptaI) could methylate emodin to form physcion. PtaJ could then catalyze the oxidative cleavage of physcion, and rotation of the intermediate could then afford desmethylisosulochrin. PtaF, a putative NADH-dependent oxidoreductase, might also participate in the oxidative cleavage step. Desmethylisosulochrin is then transformed by another O-methyltransferase (ptaH or ptaI) to form isosulochrin. Chlorination of isosulochrin by ptaM in the cyclohexadienone B ring then produces chloroisosulochrin. PtaE is responsible for the oxidative coupling reactions of both benzophenones isosulochrin and chloroisosulochrin to RES-1214-1 and pestheic acid respectively, regardless of chlorination. The chain is Flavin-dependent halogenase ptaM from Pestalotiopsis fici (strain W106-1 / CGMCC3.15140).